The primary structure comprises 412 residues: Serine hydroxymethyltransferase (412 aa).

(6S)-5,6,7,8-tetrahydrofolate contacts are provided by residues Leu117 and 121–123 (GHL). Residue Lys226 is modified to N6-(pyridoxal phosphate)lysine.

It belongs to the SHMT family. In terms of assembly, homodimer. Pyridoxal 5'-phosphate serves as cofactor.

Its subcellular location is the cytoplasm. The enzyme catalyses (6R)-5,10-methylene-5,6,7,8-tetrahydrofolate + glycine + H2O = (6S)-5,6,7,8-tetrahydrofolate + L-serine. It participates in one-carbon metabolism; tetrahydrofolate interconversion. It functions in the pathway amino-acid biosynthesis; glycine biosynthesis; glycine from L-serine: step 1/1. In terms of biological role, catalyzes the reversible interconversion of serine and glycine with tetrahydrofolate (THF) serving as the one-carbon carrier. This reaction serves as the major source of one-carbon groups required for the biosynthesis of purines, thymidylate, methionine, and other important biomolecules. Also exhibits THF-independent aldolase activity toward beta-hydroxyamino acids, producing glycine and aldehydes, via a retro-aldol mechanism. The chain is Serine hydroxymethyltransferase from Staphylococcus aureus (strain bovine RF122 / ET3-1).